The following is a 407-amino-acid chain: Multifunctional CCA protein (407 aa).

ATP contacts are provided by glycine 8 and arginine 11. 2 residues coordinate CTP: glycine 8 and arginine 11. 2 residues coordinate Mg(2+): aspartate 21 and aspartate 23. ATP contacts are provided by arginine 91, arginine 137, and arginine 140. Arginine 91, arginine 137, and arginine 140 together coordinate CTP. The HD domain maps to 228–329 (TGMHTLMVSQ…IKIFDKMDLW (102 aa)).

Belongs to the tRNA nucleotidyltransferase/poly(A) polymerase family. Bacterial CCA-adding enzyme type 1 subfamily. Monomer. Can also form homodimers and oligomers. It depends on Mg(2+) as a cofactor. Ni(2+) is required as a cofactor.

The catalysed reaction is a tRNA precursor + 2 CTP + ATP = a tRNA with a 3' CCA end + 3 diphosphate. The enzyme catalyses a tRNA with a 3' CCA end + 2 CTP + ATP = a tRNA with a 3' CCACCA end + 3 diphosphate. Catalyzes the addition and repair of the essential 3'-terminal CCA sequence in tRNAs without using a nucleic acid template. Adds these three nucleotides in the order of C, C, and A to the tRNA nucleotide-73, using CTP and ATP as substrates and producing inorganic pyrophosphate. tRNA 3'-terminal CCA addition is required both for tRNA processing and repair. Also involved in tRNA surveillance by mediating tandem CCA addition to generate a CCACCA at the 3' terminus of unstable tRNAs. While stable tRNAs receive only 3'-terminal CCA, unstable tRNAs are marked with CCACCA and rapidly degraded. The chain is Multifunctional CCA protein from Aliivibrio salmonicida (strain LFI1238) (Vibrio salmonicida (strain LFI1238)).